The following is a 137-amino-acid chain: Large ribosomal subunit protein uL14A (137 aa).

Ser-2 carries the post-translational modification N-acetylserine. 2 positions are modified to N6,N6-dimethyllysine; by RKM1: Lys-106 and Lys-110.

Belongs to the universal ribosomal protein uL14 family. In terms of assembly, component of the large ribosomal subunit (LSU). Mature yeast ribosomes consist of a small (40S) and a large (60S) subunit. The 40S small subunit contains 1 molecule of ribosomal RNA (18S rRNA) and 33 different proteins (encoded by 57 genes). The large 60S subunit contains 3 rRNA molecules (25S, 5.8S and 5S rRNA) and 46 different proteins (encoded by 81 genes). In terms of processing, methylated by RKM1 at 2 different sites, but it is unclear which are the 2 methylated residues among Lys-40, Lys-106 and/or Lys-110.

It localises to the cytoplasm. In terms of biological role, component of the ribosome, a large ribonucleoprotein complex responsible for the synthesis of proteins in the cell. The small ribosomal subunit (SSU) binds messenger RNAs (mRNAs) and translates the encoded message by selecting cognate aminoacyl-transfer RNA (tRNA) molecules. The large subunit (LSU) contains the ribosomal catalytic site termed the peptidyl transferase center (PTC), which catalyzes the formation of peptide bonds, thereby polymerizing the amino acids delivered by tRNAs into a polypeptide chain. The nascent polypeptides leave the ribosome through a tunnel in the LSU and interact with protein factors that function in enzymatic processing, targeting, and the membrane insertion of nascent chains at the exit of the ribosomal tunnel. This chain is Large ribosomal subunit protein uL14A, found in Saccharomyces cerevisiae (strain ATCC 204508 / S288c) (Baker's yeast).